Consider the following 315-residue polypeptide: MLADWFSEQFSTGVLIVPCMLTLAIPGVLPRFKAEQMMPAIALIVSVIASVVIGGAGSLAFPLPALIWCAVRYTPQVTCLLTFVTGAVEIVLVANSVIDISVGSPFSIPQMFSARLGIATMAICPIMVSFSVAAINSLMKQVALRADFDFLTQVYSRSGLYEALKSPSLKQTQHLTVMLLDIDYFKSINDNYGHECGDKVLSVFARHIQKIVGDKGLVARMGGEEFAVAVPSVNPVDGLLMAEKIRKGVELQPFTWQQKTLYLTVSIGVGSGRASYLTLTDDFNKLMVEADTCLYRSKKDGRNRTSTMRYGEEVV.

The next 4 helical transmembrane spans lie at 10–30, 41–61, 80–100, and 116–136; these read FSTG…GVLP, IALI…SLAF, LLTF…VIDI, and LGIA…AAIN. The 138-residue stretch at 173 to 310 folds into the GGDEF domain; sequence QHLTVMLLDI…GRNRTSTMRY (138 aa). The Mg(2+) site is built by Asp181 and Ile182. The substrate site is built by Asn189, His194, and Asp198. A Mg(2+)-binding site is contributed by Glu224.

As to quaternary structure, homodimer. The cofactor is Mg(2+).

It localises to the cell membrane. The enzyme catalyses 2 GTP = 3',3'-c-di-GMP + 2 diphosphate. The protein operates within purine metabolism; 3',5'-cyclic di-GMP biosynthesis. Functionally, catalyzes the synthesis of cyclic-di-GMP (c-di-GMP) via the condensation of 2 GTP molecules. This is Probable diguanylate cyclase DgcF from Escherichia coli (strain K12).